The chain runs to 709 residues: Pentatricopeptide repeat-containing protein At5g42310, chloroplastic (709 aa).

The transit peptide at Met1–Ser54 directs the protein to the chloroplast. 14 PPR repeats span residues Thr196–Ser230, Asp231–Leu267, Asp268–Ala302, Lys303–Pro337, Arg338–Pro372, Asp373–Pro407, Asn408–Pro442, Asp443–Pro477, Asp478–Pro512, Cys513–Pro547, Asn548–Pro582, Ser583–Pro617, Ser618–Pro652, and Asp653–Pro687.

This sequence belongs to the PPR family. P subfamily. Interacts with PDE338.

The protein localises to the plastid. It is found in the chloroplast stroma. The protein resides in the chloroplast thylakoid. Its subcellular location is the chloroplast. Required for chloroplast protein synthesis and accumulation of subunits of the thylakoid protein complexes. Activates psaC and petA translation by binding their 5'-UTRs. Required for the correct processing of petB and petD mRNAs. Interacts with the petB and petD intergenic region and is required for the generation of petB and petD monocistronic RNAs. This chain is Pentatricopeptide repeat-containing protein At5g42310, chloroplastic, found in Arabidopsis thaliana (Mouse-ear cress).